A 362-amino-acid chain; its full sequence is Dihydroorotate dehydrogenase (quinone) (362 aa).

FMN contacts are provided by residues 62–66 (AGYDK) and T86. A substrate-binding site is contributed by K66. 111–115 (NRLGF) provides a ligand contact to substrate. 2 residues coordinate FMN: N139 and N170. Substrate is bound at residue N170. Catalysis depends on S173, which acts as the Nucleophile. Residue N175 participates in substrate binding. K215 and S243 together coordinate FMN. Residue 244–245 (NT) participates in substrate binding. FMN-binding positions include G266, G295, and 316-317 (YS).

Belongs to the dihydroorotate dehydrogenase family. Type 2 subfamily. As to quaternary structure, monomer. It depends on FMN as a cofactor.

The protein localises to the cell membrane. The enzyme catalyses (S)-dihydroorotate + a quinone = orotate + a quinol. It functions in the pathway pyrimidine metabolism; UMP biosynthesis via de novo pathway; orotate from (S)-dihydroorotate (quinone route): step 1/1. Catalyzes the conversion of dihydroorotate to orotate with quinone as electron acceptor. The sequence is that of Dihydroorotate dehydrogenase (quinone) from Rhizobium rhizogenes (strain K84 / ATCC BAA-868) (Agrobacterium radiobacter).